Here is a 142-residue protein sequence, read N- to C-terminus: Large ribosomal subunit protein uL11 (142 aa).

Belongs to the universal ribosomal protein uL11 family. Part of the ribosomal stalk of the 50S ribosomal subunit. Interacts with L10 and the large rRNA to form the base of the stalk. L10 forms an elongated spine to which L12 dimers bind in a sequential fashion forming a multimeric L10(L12)X complex. In terms of processing, one or more lysine residues are methylated.

Its function is as follows. Forms part of the ribosomal stalk which helps the ribosome interact with GTP-bound translation factors. This is Large ribosomal subunit protein uL11 from Enterobacter sp. (strain 638).